Consider the following 229-residue polypeptide: Clathrin light chain (229 aa).

2 disordered regions span residues methionine 1–asparagine 24 and glutamate 76–glutamate 132. Basic and acidic residues predominate over residues glutamate 107–glutamate 132. The residue at position 229 (serine 229) is a Phosphoserine.

It belongs to the clathrin light chain family. In terms of assembly, clathrin coats are formed from molecules containing 3 heavy chains and 3 light chains.

The protein localises to the cytoplasmic vesicle membrane. The protein resides in the membrane. It is found in the coated pit. In terms of biological role, clathrin is the major protein of the polyhedral coat of coated pits and vesicles. This Schizosaccharomyces pombe (strain 972 / ATCC 24843) (Fission yeast) protein is Clathrin light chain (clc1).